A 104-amino-acid chain; its full sequence is Phosphoribosyl-ATP pyrophosphatase (104 aa).

This sequence belongs to the PRA-PH family.

It localises to the cytoplasm. It catalyses the reaction 1-(5-phospho-beta-D-ribosyl)-ATP + H2O = 1-(5-phospho-beta-D-ribosyl)-5'-AMP + diphosphate + H(+). The protein operates within amino-acid biosynthesis; L-histidine biosynthesis; L-histidine from 5-phospho-alpha-D-ribose 1-diphosphate: step 2/9. The chain is Phosphoribosyl-ATP pyrophosphatase from Methanocorpusculum labreanum (strain ATCC 43576 / DSM 4855 / Z).